A 251-amino-acid polypeptide reads, in one-letter code: CDP-diacylglycerol pyrophosphatase (251 aa).

A helical membrane pass occupies residues 5-25 (GYFLLAVIVIVAAAGVGYWKF).

It belongs to the Cdh family.

The protein resides in the cell inner membrane. The enzyme catalyses a CDP-1,2-diacyl-sn-glycerol + H2O = a 1,2-diacyl-sn-glycero-3-phosphate + CMP + 2 H(+). Its pathway is phospholipid metabolism; CDP-diacylglycerol degradation; phosphatidate from CDP-diacylglycerol: step 1/1. This chain is CDP-diacylglycerol pyrophosphatase, found in Salmonella paratyphi A (strain ATCC 9150 / SARB42).